A 192-amino-acid polypeptide reads, in one-letter code: Thymidine kinase (192 aa).

ATP contacts are provided by residues 9 to 16 and 87 to 90; these read SAMNAGKS and DECQ. E88 acts as the Proton acceptor in catalysis. Residues C145, C147, C182, and H185 each coordinate Zn(2+).

Belongs to the thymidine kinase family. Homotetramer.

The protein localises to the cytoplasm. It catalyses the reaction thymidine + ATP = dTMP + ADP + H(+). This is Thymidine kinase from Vibrio vulnificus (strain YJ016).